A 269-amino-acid polypeptide reads, in one-letter code: Phosphatidate cytidylyltransferase (269 aa).

8 helical membrane-spanning segments follow: residues Leu-13–Ile-33, Leu-50–Pro-70, Ile-81–Val-101, Val-110–Ile-130, Leu-138–Val-158, Phe-180–Leu-200, Pro-201–Gly-221, and Ile-247–Leu-267.

This sequence belongs to the CDS family.

The protein localises to the cell membrane. The catalysed reaction is a 1,2-diacyl-sn-glycero-3-phosphate + CTP + H(+) = a CDP-1,2-diacyl-sn-glycerol + diphosphate. Its pathway is phospholipid metabolism; CDP-diacylglycerol biosynthesis; CDP-diacylglycerol from sn-glycerol 3-phosphate: step 3/3. In Bacillus subtilis (strain 168), this protein is Phosphatidate cytidylyltransferase (cdsA).